A 432-amino-acid polypeptide reads, in one-letter code: Putative transposase A625R (432 aa).

The Zn(2+) site is built by Cys-375, Cys-378, Cys-393, and Cys-395.

This sequence in the N-terminal section; belongs to the transposase 2 family. In the C-terminal section; belongs to the transposase 35 family.

This chain is Putative transposase A625R, found in Chlorella (PBCV-1).